The following is a 93-amino-acid chain: Probable Fe(2+)-trafficking protein (93 aa).

The protein belongs to the Fe(2+)-trafficking protein family.

Could be a mediator in iron transactions between iron acquisition and iron-requiring processes, such as synthesis and/or repair of Fe-S clusters in biosynthetic enzymes. The polypeptide is Probable Fe(2+)-trafficking protein (Polaromonas naphthalenivorans (strain CJ2)).